We begin with the raw amino-acid sequence, 307 residues long: Aspartate carbamoyltransferase catalytic subunit (307 aa).

Residues arginine 54 and threonine 55 each coordinate carbamoyl phosphate. Lysine 83 provides a ligand contact to L-aspartate. Residues arginine 104, histidine 132, and glutamine 135 each contribute to the carbamoyl phosphate site. The L-aspartate site is built by arginine 165 and arginine 228. Residues leucine 267 and proline 268 each contribute to the carbamoyl phosphate site.

The protein belongs to the aspartate/ornithine carbamoyltransferase superfamily. ATCase family. As to quaternary structure, heterododecamer (2C3:3R2) of six catalytic PyrB chains organized as two trimers (C3), and six regulatory PyrI chains organized as three dimers (R2).

It catalyses the reaction carbamoyl phosphate + L-aspartate = N-carbamoyl-L-aspartate + phosphate + H(+). The protein operates within pyrimidine metabolism; UMP biosynthesis via de novo pathway; (S)-dihydroorotate from bicarbonate: step 2/3. In terms of biological role, catalyzes the condensation of carbamoyl phosphate and aspartate to form carbamoyl aspartate and inorganic phosphate, the committed step in the de novo pyrimidine nucleotide biosynthesis pathway. In Clostridium botulinum (strain Loch Maree / Type A3), this protein is Aspartate carbamoyltransferase catalytic subunit.